We begin with the raw amino-acid sequence, 38 residues long: U9-ctenitoxin-Pk1a (38 aa).

4 cysteine pairs are disulfide-bonded: C2/C17, C9/C22, C16/C36, and C24/C34.

Expressed by the venom gland.

The protein resides in the secreted. The protein is U9-ctenitoxin-Pk1a of Phoneutria keyserlingi (Brazilian wandering spider).